Reading from the N-terminus, the 656-residue chain is Putative L-type lectin-domain containing receptor kinase V.2 (656 aa).

Positions 1–23 are cleaved as a signal peptide; sequence MSLLLKMLLFSLFFFYMASISQC. Over 24–276 the chain is Extracellular; sequence SDPTGGQFSF…EDQERSLSSK (253 aa). Positions 29–248 are legume-lectin like; that stretch reads GQFSFNGYLY…SHYILGWSFN (220 aa). N78, N124, N159, N190, and N257 each carry an N-linked (GlcNAc...) asparagine glycan. Residues 277–297 form a helical membrane-spanning segment; that stretch reads ILAISLSISGVTLVIVLILGV. At 298-656 the chain is on the cytoplasmic side; it reads MLFLKRKKFL…MTESFLSSGR (359 aa). The 282-residue stretch at 334 to 615 folds into the Protein kinase domain; it reads FKNSEVLGKG…GVATLPHNLL (282 aa). Residues 340 to 348 and K363 contribute to the ATP site; that span reads LGKGGFGKV. Residue D459 is the Proton acceptor of the active site.

It in the C-terminal section; belongs to the protein kinase superfamily. Ser/Thr protein kinase family. In the N-terminal section; belongs to the leguminous lectin family.

It localises to the cell membrane. It catalyses the reaction L-seryl-[protein] + ATP = O-phospho-L-seryl-[protein] + ADP + H(+). It carries out the reaction L-threonyl-[protein] + ATP = O-phospho-L-threonyl-[protein] + ADP + H(+). This is Putative L-type lectin-domain containing receptor kinase V.2 (LECRK52) from Arabidopsis thaliana (Mouse-ear cress).